The following is a 319-amino-acid chain: Ninja-family protein Os07g0602900 (319 aa).

Disordered stretches follow at residues 1–26, 69–152, and 181–234; these read MAAS…EKGG, LPGG…DAMY, and AEAM…LTMR. Residues 70 to 79 are compositionally biased toward gly residues; sequence PGGGGGGAGG. Residues 105-118 show a composition bias toward basic and acidic residues; that stretch reads ERWRRREMQSLKRL. The segment covering 185-196 has biased composition (polar residues); sequence DTSSSDNASCQN. A compositionally biased stretch (low complexity) spans 225-234; it reads LRTLRSLTMR.

This sequence belongs to the Ninja family.

The protein localises to the nucleus. This Oryza sativa subsp. japonica (Rice) protein is Ninja-family protein Os07g0602900.